The following is a 196-amino-acid chain: Dimiconin (196 aa).

The signal sequence occupies residues 1-21; that stretch reads MKTIIVVTIFGILTCAYPTDG. Asn-62 and Asn-187 each carry an N-linked (GlcNAc...) asparagine glycan.

The protein belongs to the calycin superfamily. Triabin family. As to expression, salivary gland.

The protein localises to the secreted. Inhibits the intrinsic blood coagulation pathway by blocking the activation of host coagulation factor XII (F12) but not the enzymatic activity of activated F12. The chain is Dimiconin from Triatoma dimidiata (Kissing bug).